The sequence spans 736 residues: Catalase-peroxidase (736 aa).

Residues 100-223 (WHSAGTYRIG…LAAVQMGLIY (124 aa)) constitute a cross-link (tryptophyl-tyrosyl-methioninium (Trp-Tyr) (with M-249)). The active-site Proton acceptor is histidine 101. Positions 223 to 249 (YVNPEGPDGKPDPVAAARDIRETFRRM) form a cross-link, tryptophyl-tyrosyl-methioninium (Tyr-Met) (with W-100). A heme b-binding site is contributed by histidine 264.

Belongs to the peroxidase family. Peroxidase/catalase subfamily. In terms of assembly, homodimer or homotetramer. Heme b is required as a cofactor. Formation of the three residue Trp-Tyr-Met cross-link is important for the catalase, but not the peroxidase activity of the enzyme.

It carries out the reaction H2O2 + AH2 = A + 2 H2O. The catalysed reaction is 2 H2O2 = O2 + 2 H2O. Its function is as follows. Bifunctional enzyme with both catalase and broad-spectrum peroxidase activity. The polypeptide is Catalase-peroxidase (Geobacillus kaustophilus (strain HTA426)).